A 308-amino-acid chain; its full sequence is Staphylococcal superantigen-like 4 (308 aa).

Residues 1 to 30 form the signal peptide; that stretch reads MKITTIAKTSLALGLLTTGVITTTTQAANA. A disordered region spans residues 32–117; that stretch reads TLSSTKVEAP…TTKQVPTEIN (86 aa). Polar residues-rich tracts occupy residues 33–47 and 55–76; these read LSST…TPPS and SKPN…TANA. The segment covering 77-93 has biased composition (low complexity); it reads TTPPSTKVTTPPSTNTP. Over residues 94–114 the composition is skewed to polar residues; sequence QPMQSTKSDTPQSPTTKQVPT. The tract at residues 180–278 is sialyl Lewis X-binding; the sequence is VDVFVVLEEN…VIKMKNGGKY (99 aa).

The protein belongs to the staphylococcal/streptococcal toxin family.

The protein localises to the secreted. Its function is as follows. Secreted protein that plays a role in immune innate response inhibition by interfering with host TLR2-mediated pathway. The protein is Staphylococcal superantigen-like 4 of Staphylococcus aureus (strain NCTC 8325 / PS 47).